We begin with the raw amino-acid sequence, 147 residues long: Protein phosphatase 1 regulatory subunit 14B (147 aa).

A compositionally biased stretch (low complexity) spans 1 to 15 (MADSGPAGGAALAAP). Residues 1–55 (MADSGPAGGAALAAPAPGPGSGGAGPRVYFQSPPGAAGEGPGGADDEGPVRRQGK) form a disordered region. Alanine 2 carries the post-translational modification N-acetylalanine. Serine 21 bears the Phosphoserine mark. Tyrosine 29 carries the post-translational modification Phosphotyrosine. At serine 32 the chain carries Phosphoserine. Phosphothreonine is present on threonine 57. Residues 61–103 (DRKELRKRLNLEEWILEQLTRLYDCQEEEIPELEIDVDELLDM) adopt a coiled-coil conformation.

This sequence belongs to the PP1 inhibitor family. In terms of processing, phosphorylated primarily on Thr-57 by PKC (in vitro). An unknown Ser is also phosphorylated by PKC (in vitro).

Its subcellular location is the cytoplasm. Functionally, inhibitor of PPP1CA. Has over 50-fold higher inhibitory activity when phosphorylated. This is Protein phosphatase 1 regulatory subunit 14B (PPP1R14B) from Sus scrofa (Pig).